Reading from the N-terminus, the 90-residue chain is Probable acyl carrier protein (90 aa).

In terms of domain architecture, Carrier spans 9–90 (QVTVEELSAL…LVNGALKTGV (82 aa)). The residue at position 47 (serine 47) is an O-(pantetheine 4'-phosphoryl)serine.

4'-phosphopantetheine is transferred from CoA to a specific serine of the apo-ACP-like protein.

Involved in developmentally regulated synthesis of a compound biosynthetically related to polyketide antibiotics which is essential for spore color in Streptomyces coelicolor. In Streptomyces coelicolor (strain ATCC BAA-471 / A3(2) / M145), this protein is Probable acyl carrier protein.